A 636-amino-acid chain; its full sequence is Alpha-L-iduronidase (636 aa).

A signal peptide spans 1-16 (MLSLLLVLTTLARIHA). Alpha-D-mannopyranose is bound by residues P39, I43, and H45. Alpha-L-iduronate is bound by residues H78, N169, and E170. The active-site Proton donor is the E170. N180 carries N-linked (GlcNAc...) asparagine glycosylation. Alpha-L-iduronate is bound at residue K257. N-linked (GlcNAc...) asparagine glycosylation is present at N268. Alpha-L-iduronate contacts are provided by E293 and G299. Residue E293 is the Nucleophile of the active site. W300 serves as a coordination point for alpha-D-mannopyranose. Residues D342 and R356 each coordinate alpha-L-iduronate. 4 N-linked (GlcNAc...) asparagine glycosylation sites follow: N365, N448, N453, and N483. C529 and C565 are oxidised to a cystine. The N-linked (GlcNAc...) asparagine glycan is linked to N622.

It belongs to the glycosyl hydrolase 39 family.

It is found in the lysosome. The enzyme catalyses Hydrolysis of unsulfated alpha-L-iduronosidic linkages in dermatan sulfate.. Functionally, essential lysosomal hydrolase responsible for the degradation of glycosaminoglycans (GAG) such as heparan sulfate. Required for lysosome function and autophagy. Consequently, has an essential role in the development, maintenance and function of various cells, tissues, and organs, including the muscles and the central nervous system (CNS). The chain is Alpha-L-iduronidase from Drosophila melanogaster (Fruit fly).